The chain runs to 883 residues: Integrator complex subunit 6-A (883 aa).

Positions 3–227 constitute a VWFA domain; sequence ILLFLLDTSA…QCLESLVQKV (225 aa). The Inhibitory loop motif lies at 626-633; the sequence is MMIDEADE.

The protein belongs to the Integrator subunit 6 family. In terms of assembly, component of the Integrator complex, composed of core subunits INTS1, INTS2, INTS3, INTS4, INTS5, INTS6, INTS7, INTS8, INTS9/RC74, INTS10, INTS11/CPSF3L, INTS12, INTS13, INTS14 and INTS15. The core complex associates with protein phosphatase 2A subunits PPP2CA and PPP2R1A, to form the Integrator-PP2A (INTAC) complex.

Its subcellular location is the nucleus. The protein resides in the chromosome. Its function is as follows. Component of the integrator complex, a multiprotein complex that terminates RNA polymerase II (Pol II) transcription in the promoter-proximal region of genes. The integrator complex provides a quality checkpoint during transcription elongation by driving premature transcription termination of transcripts that are unfavorably configured for transcriptional elongation: the complex terminates transcription by (1) catalyzing dephosphorylation of the C-terminal domain (CTD) of Pol II subunit POLR2A/RPB1 and SUPT5H/SPT5, (2) degrading the exiting nascent RNA transcript via endonuclease activity and (3) promoting the release of Pol II from bound DNA. The integrator complex is also involved in terminating the synthesis of non-coding Pol II transcripts, such as enhancer RNAs (eRNAs), small nuclear RNAs (snRNAs), telomerase RNAs and long non-coding RNAs (lncRNAs). Within the integrator complex, INTS6 acts as a molecular adapter that promotes assembly of protein phosphatase 2A (PP2A) subunits to the integrator core complex, promoting recruitment of PP2A to transcription pause-release checkpoint. In Xenopus laevis (African clawed frog), this protein is Integrator complex subunit 6-A (ints6-a).